The sequence spans 143 residues: Large-conductance mechanosensitive channel (143 aa).

Helical transmembrane passes span 21–41, 44–64, and 86–106; these read VGVI…ADII, VVGL…LGTV, and GNFI…FMMV.

It belongs to the MscL family. In terms of assembly, homopentamer.

It is found in the cell inner membrane. Functionally, channel that opens in response to stretch forces in the membrane lipid bilayer. May participate in the regulation of osmotic pressure changes within the cell. The sequence is that of Large-conductance mechanosensitive channel from Variovorax paradoxus (strain S110).